Here is a 533-residue protein sequence, read N- to C-terminus: UDP-glucuronosyltransferase 1-2 (533 aa).

A signal peptide spans 1 to 27 (MDTGLCAPLRGLSGLLLLLCALPWAEG). N-linked (GlcNAc...) asparagine glycosylation is found at N133, N141, N295, and N433. The helical transmembrane segment at 491–507 (VIGFLLAIVLTVVFIVY) threads the bilayer.

Belongs to the UDP-glycosyltransferase family.

The protein localises to the microsome. It is found in the endoplasmic reticulum membrane. The catalysed reaction is glucuronate acceptor + UDP-alpha-D-glucuronate = acceptor beta-D-glucuronoside + UDP + H(+). Functionally, UDPGT is of major importance in the conjugation and subsequent elimination of potentially toxic xenobiotics and endogenous compounds. This chain is UDP-glucuronosyltransferase 1-2 (Ugt1a2), found in Rattus norvegicus (Rat).